The primary structure comprises 615 residues: Cilia- and flagella-associated protein 52 (615 aa).

11 WD repeats span residues 54–98 (GHSD…LIHR), 101–142 (LHKV…AICG), 145–184 (CNTN…NKLR), 232–275 (GPAK…AGTK), 320–359 (AHND…ELLR), 362–401 (VPNL…IIFT), 405–444 (AHQK…QTLE), 449–488 (DHKG…RRTS), 490–529 (FANT…AIRI), 533–572 (SDLD…CYFV), and 575–614 (AHSG…TLAD).

It belongs to the CFAP52 family.

It is found in the cytoplasm. Its subcellular location is the cell projection. It localises to the cilium. The protein resides in the flagellum. Functionally, may play a role in cell growth and/or survival. In Chlamydomonas reinhardtii (Chlamydomonas smithii), this protein is Cilia- and flagella-associated protein 52.